Consider the following 332-residue polypeptide: UPF0194 membrane protein YbhG (332 aa).

The N-terminal stretch at methionine 1–alanine 16 is a signal peptide. Positions glutamate 108–alanine 209 form a coiled coil.

The protein belongs to the UPF0194 family.

The protein resides in the periplasm. This Escherichia coli O127:H6 (strain E2348/69 / EPEC) protein is UPF0194 membrane protein YbhG.